A 76-amino-acid chain; its full sequence is UPF0154 protein Sca_0984 (76 aa).

Residues 4–24 form a helical membrane-spanning segment; it reads WLAILLIVAALIIGLVGGFFL.

It belongs to the UPF0154 family.

It is found in the cell membrane. This is UPF0154 protein Sca_0984 from Staphylococcus carnosus (strain TM300).